A 324-amino-acid chain; its full sequence is Aspartate carbamoyltransferase catalytic subunit (324 aa).

Positions 55 and 56 each coordinate carbamoyl phosphate. L-aspartate is bound at residue lysine 83. Residues arginine 105, histidine 135, and glutamine 138 each coordinate carbamoyl phosphate. Positions 173 and 227 each coordinate L-aspartate. Glycine 268 and proline 269 together coordinate carbamoyl phosphate.

Belongs to the aspartate/ornithine carbamoyltransferase superfamily. ATCase family. Heterododecamer (2C3:3R2) of six catalytic PyrB chains organized as two trimers (C3), and six regulatory PyrI chains organized as three dimers (R2).

It carries out the reaction carbamoyl phosphate + L-aspartate = N-carbamoyl-L-aspartate + phosphate + H(+). It participates in pyrimidine metabolism; UMP biosynthesis via de novo pathway; (S)-dihydroorotate from bicarbonate: step 2/3. In terms of biological role, catalyzes the condensation of carbamoyl phosphate and aspartate to form carbamoyl aspartate and inorganic phosphate, the committed step in the de novo pyrimidine nucleotide biosynthesis pathway. This Nocardioides sp. (strain ATCC BAA-499 / JS614) protein is Aspartate carbamoyltransferase catalytic subunit.